Here is a 499-residue protein sequence, read N- to C-terminus: Trichoplein keratin filament-binding protein (499 aa).

Coiled coils occupy residues 17-143, 169-304, and 405-485; these read LEQQ…LYEQ, EQIT…LSAL, and NRER…TQRG. Residues 260-426 form a trichohyalin/plectin homology domain region; sequence RKMEQCRKKT…RQFTSREKKQ (167 aa).

This sequence belongs to the TCHP family.

Its subcellular location is the cytoplasm. The protein localises to the cytoskeleton. The protein resides in the microtubule organizing center. It localises to the centrosome. Functionally, may act as a 'capping' or 'branching' protein for keratin filaments in the cell periphery. May regulate K8/K18 filament and desmosome organization mainly at the apical or peripheral regions of simple epithelial cells. In Xenopus laevis (African clawed frog), this protein is Trichoplein keratin filament-binding protein.